Here is a 222-residue protein sequence, read N- to C-terminus: PKHD-type hydroxylase Syncc9605_1577 (222 aa).

One can recognise a Fe2OG dioxygenase domain in the interval 80-175 (KVHSLLVSRS…RYVCVGWIES (96 aa)). Histidine 98, aspartate 100, and histidine 156 together coordinate Fe cation. Arginine 166 is a binding site for 2-oxoglutarate.

It depends on Fe(2+) as a cofactor. Requires L-ascorbate as cofactor.

This Synechococcus sp. (strain CC9605) protein is PKHD-type hydroxylase Syncc9605_1577.